A 113-amino-acid chain; its full sequence is Large ribosomal subunit protein bL19 (113 aa).

This sequence belongs to the bacterial ribosomal protein bL19 family.

Functionally, this protein is located at the 30S-50S ribosomal subunit interface and may play a role in the structure and function of the aminoacyl-tRNA binding site. The protein is Large ribosomal subunit protein bL19 of Mycobacterium sp. (strain JLS).